The sequence spans 756 residues: MQSVFNATRVSAVVGGKEIILETGRLANQAHGAVWVQCGGTVVLVTACTQPLERDMGFFPLTVDYSEKMYAAGRIPGSFFRREIGRPSERETLVSRLIDRPVRPLFTKGFRDEVQILANVISADQENDSDVLAVTGASAALSISPIPFEGPVAGARIGRVNGEFVLNPTMKEMEASDLAIVIAASRDSVVMVEGEAHFVPEDVIVAALEWAHKEIQPLIDAQLKLMELVGKAKMAVTPPVENAELKARVAELATTELDAALRIPEKMARKDARKAVKEKVLEALLADPALAENANLGREVGDMLGSLEKVLVRRRILKEGTRIDGRDTKTVRPILIEAGLLPRAHGSALFSRGETKSLVVATLGSSTDSQRMDSLVGDVTKKFMLHYNFPPYSVGEVKMSRVSRREIGHGALAEKALKPVLPQDDSFPFTLRVVAETMESNGSSSMAAVCGGSLSLMDAGVPVTAPVAGVAMGLIKEEGEYLVLTDILGDEDALGDMDFKIAGTAEGITAVQMDIKITGLPTDVMARAMAQAREARLHILAEMAKVLEAPRTELSKYAPQHAEVFVNPDVIRIIIGPGGKNIKAITAATGASIDIEDSGKVSIFAPTYEAMEMAREMVQYYDQRAELGKNYVGKVRKVLEIGAIVEILPNLEALVHISQLDTNRVEQAGDVARLGEDMTVKVIEINGDRIRASRKAVLLEEQGVEWNPEDTARPSGPPRDRGDRGDRGGRGDRGGDRRGGDRGGRGGDRGRGGDRR.

2 residues coordinate Mg(2+): Asp492 and Asp498. The KH domain maps to 559–618 (PQHAEVFVNPDVIRIIIGPGGKNIKAITAATGASIDIEDSGKVSIFAPTYEAMEMAREMV). Residues 628–702 (GKNYVGKVRK…SRKAVLLEEQ (75 aa)) form the S1 motif domain. A disordered region spans residues 703 to 756 (GVEWNPEDTARPSGPPRDRGDRGDRGGRGDRGGDRRGGDRGGRGGDRGRGGDRR). The span at 718–756 (PRDRGDRGDRGGRGDRGGDRRGGDRGGRGGDRGRGGDRR) shows a compositional bias: basic and acidic residues.

Belongs to the polyribonucleotide nucleotidyltransferase family. Mg(2+) is required as a cofactor.

It is found in the cytoplasm. It carries out the reaction RNA(n+1) + phosphate = RNA(n) + a ribonucleoside 5'-diphosphate. Functionally, involved in mRNA degradation. Catalyzes the phosphorolysis of single-stranded polyribonucleotides processively in the 3'- to 5'-direction. This chain is Polyribonucleotide nucleotidyltransferase, found in Nitratidesulfovibrio vulgaris (strain DSM 19637 / Miyazaki F) (Desulfovibrio vulgaris).